Reading from the N-terminus, the 344-residue chain is Phosphate acyltransferase (344 aa).

It belongs to the PlsX family. In terms of assembly, homodimer. Probably interacts with PlsY.

Its subcellular location is the cytoplasm. The enzyme catalyses a fatty acyl-[ACP] + phosphate = an acyl phosphate + holo-[ACP]. The protein operates within lipid metabolism; phospholipid metabolism. Its function is as follows. Catalyzes the reversible formation of acyl-phosphate (acyl-PO(4)) from acyl-[acyl-carrier-protein] (acyl-ACP). This enzyme utilizes acyl-ACP as fatty acyl donor, but not acyl-CoA. The sequence is that of Phosphate acyltransferase from Cronobacter sakazakii (strain ATCC BAA-894) (Enterobacter sakazakii).